The sequence spans 207 residues: Cytochrome c biogenesis ATP-binding export protein CcmA (207 aa).

Positions 4-207 (LEVRELLCER…RISLTQTRAV (204 aa)) constitute an ABC transporter domain. 36-43 (GSNGAGKT) contributes to the ATP binding site.

Belongs to the ABC transporter superfamily. CcmA exporter (TC 3.A.1.107) family. In terms of assembly, the complex is composed of two ATP-binding proteins (CcmA) and two transmembrane proteins (CcmB).

It is found in the cell inner membrane. It carries out the reaction heme b(in) + ATP + H2O = heme b(out) + ADP + phosphate + H(+). In terms of biological role, part of the ABC transporter complex CcmAB involved in the biogenesis of c-type cytochromes; once thought to export heme, this seems not to be the case, but its exact role is uncertain. Responsible for energy coupling to the transport system. This chain is Cytochrome c biogenesis ATP-binding export protein CcmA, found in Escherichia coli O157:H7.